The sequence spans 244 residues: Large ribosomal subunit protein uL30 (244 aa).

This sequence belongs to the universal ribosomal protein uL30 family.

The chain is Large ribosomal subunit protein uL30 (RPL7) from Candida glabrata (strain ATCC 2001 / BCRC 20586 / JCM 3761 / NBRC 0622 / NRRL Y-65 / CBS 138) (Yeast).